The chain runs to 150 residues: 3-hydroxyacyl-[acyl-carrier-protein] dehydratase FabZ (150 aa).

Histidine 47 is an active-site residue.

This sequence belongs to the thioester dehydratase family. FabZ subfamily.

The protein localises to the cytoplasm. It carries out the reaction a (3R)-hydroxyacyl-[ACP] = a (2E)-enoyl-[ACP] + H2O. Functionally, involved in unsaturated fatty acids biosynthesis. Catalyzes the dehydration of short chain beta-hydroxyacyl-ACPs and long chain saturated and unsaturated beta-hydroxyacyl-ACPs. This chain is 3-hydroxyacyl-[acyl-carrier-protein] dehydratase FabZ, found in Verminephrobacter eiseniae (strain EF01-2).